The primary structure comprises 261 residues: Phosphate import ATP-binding protein PstB (261 aa).

Residues 15-256 (LQVRRLNFYY…PAHQETENYI (242 aa)) form the ABC transporter domain. Position 47 to 54 (47 to 54 (GPSGCGKS)) interacts with ATP.

The protein belongs to the ABC transporter superfamily. Phosphate importer (TC 3.A.1.7) family. As to quaternary structure, the complex is composed of two ATP-binding proteins (PstB), two transmembrane proteins (PstC and PstA) and a solute-binding protein (PstS).

The protein resides in the cell inner membrane. It catalyses the reaction phosphate(out) + ATP + H2O = ADP + 2 phosphate(in) + H(+). Functionally, part of the ABC transporter complex PstSACB involved in phosphate import. Responsible for energy coupling to the transport system. This chain is Phosphate import ATP-binding protein PstB, found in Burkholderia sp.